Here is an 84-residue protein sequence, read N- to C-terminus: Polyketide-8 synthase acyl carrier protein 1 (84 aa).

The 76-residue stretch at 7-82 folds into the Carrier domain; it reads AARKQEIKEI…GVYVVVSEAA (76 aa). Position 42 is an O-(pantetheine 4'-phosphoryl)serine (Ser-42).

Post-translationally, 4'-phosphopantetheine is transferred from CoA to a specific serine of the apo-ACP-like protein.

In terms of biological role, acyl carrier protein. This is Polyketide-8 synthase acyl carrier protein 1 from Streptomyces avermitilis (strain ATCC 31267 / DSM 46492 / JCM 5070 / NBRC 14893 / NCIMB 12804 / NRRL 8165 / MA-4680).